The primary structure comprises 266 residues: Large ribosomal subunit protein uL2m (266 aa).

This sequence belongs to the universal ribosomal protein uL2 family.

It is found in the mitochondrion. This Dictyostelium citrinum (Slime mold) protein is Large ribosomal subunit protein uL2m (mrpl2).